The following is a 115-amino-acid chain: Hydrogenase maturation factor HypA (115 aa).

Residue H2 coordinates Ni(2+). Residues C73, C76, C89, and C92 each contribute to the Zn(2+) site.

It belongs to the HypA/HybF family.

Its function is as follows. Involved in the maturation of [NiFe] hydrogenases. Required for nickel insertion into the metal center of the hydrogenase. The protein is Hydrogenase maturation factor HypA of Parabacteroides distasonis (strain ATCC 8503 / DSM 20701 / CIP 104284 / JCM 5825 / NCTC 11152).